A 448-amino-acid chain; its full sequence is Probable glycine dehydrogenase (decarboxylating) subunit 1 (448 aa).

The protein belongs to the GcvP family. N-terminal subunit subfamily. In terms of assembly, the glycine cleavage system is composed of four proteins: P, T, L and H. In this organism, the P 'protein' is a heterodimer of two subunits.

It catalyses the reaction N(6)-[(R)-lipoyl]-L-lysyl-[glycine-cleavage complex H protein] + glycine + H(+) = N(6)-[(R)-S(8)-aminomethyldihydrolipoyl]-L-lysyl-[glycine-cleavage complex H protein] + CO2. In terms of biological role, the glycine cleavage system catalyzes the degradation of glycine. The P protein binds the alpha-amino group of glycine through its pyridoxal phosphate cofactor; CO(2) is released and the remaining methylamine moiety is then transferred to the lipoamide cofactor of the H protein. This chain is Probable glycine dehydrogenase (decarboxylating) subunit 1, found in Rhodospirillum rubrum (strain ATCC 11170 / ATH 1.1.1 / DSM 467 / LMG 4362 / NCIMB 8255 / S1).